The following is a 465-amino-acid chain: Lactaldehyde dehydrogenase (465 aa).

220 to 225 (GSVEVG) lines the NAD(+) pocket. Active-site residues include glutamate 240 and cysteine 274.

This sequence belongs to the aldehyde dehydrogenase family. Homotetramer.

It catalyses the reaction (S)-lactaldehyde + NAD(+) + H2O = (S)-lactate + NADH + 2 H(+). It functions in the pathway cofactor biosynthesis; coenzyme F420 biosynthesis. In terms of biological role, involved in F420 biosynthesis through the oxidation of lactaldehyde to lactate. The sequence is that of Lactaldehyde dehydrogenase from Methanococcus maripaludis (strain DSM 14266 / JCM 13030 / NBRC 101832 / S2 / LL).